The sequence spans 118 residues: Large ribosomal subunit protein bL20 (118 aa).

The protein belongs to the bacterial ribosomal protein bL20 family.

Its function is as follows. Binds directly to 23S ribosomal RNA and is necessary for the in vitro assembly process of the 50S ribosomal subunit. It is not involved in the protein synthesizing functions of that subunit. The polypeptide is Large ribosomal subunit protein bL20 (Pseudomonas fluorescens (strain SBW25)).